The primary structure comprises 523 residues: 2-isopropylmalate synthase (523 aa).

In terms of domain architecture, Pyruvate carboxyltransferase spans 5–267; sequence VIIFDTTLRD…HTAINHQEIW (263 aa). 4 residues coordinate Mn(2+): Asp14, His202, His204, and Asn238. The regulatory domain stretch occupies residues 392–523; it reads RLDYFSVQSG…QHNENNKETV (132 aa).

The protein belongs to the alpha-IPM synthase/homocitrate synthase family. LeuA type 1 subfamily. Homodimer. The cofactor is Mn(2+).

It is found in the cytoplasm. It carries out the reaction 3-methyl-2-oxobutanoate + acetyl-CoA + H2O = (2S)-2-isopropylmalate + CoA + H(+). It participates in amino-acid biosynthesis; L-leucine biosynthesis; L-leucine from 3-methyl-2-oxobutanoate: step 1/4. In terms of biological role, catalyzes the condensation of the acetyl group of acetyl-CoA with 3-methyl-2-oxobutanoate (2-ketoisovalerate) to form 3-carboxy-3-hydroxy-4-methylpentanoate (2-isopropylmalate). The polypeptide is 2-isopropylmalate synthase (Escherichia coli (strain K12 / MC4100 / BW2952)).